The chain runs to 269 residues: MNFLGVINPVALQLGPFQIRWYGIIIASAVILAVYLSVLEGRKQNILDDDIYDLLLYSLPVAIICARIYYVVFEWSYYSHHLSETYRIWDGGIAIYGALIGAVIVILIFCRRRNIPTWTLLDVIAPTVILAQGIGRWGNFMNQEAHGVATTLGFLKSLHLPKFIINQMYIDGTYYQPTFLYESLWDISGFVVLIILRRQKKLLKSGEVVLSYIIWYSFGRFFIEGMRTDSLMLGSLRVSQWLSLILFISAIAAIFYRRYNDPLLKWYTE.

Helical transmembrane passes span 21–41 (WYGIIIASAVILAVYLSVLEG), 54–74 (LLLYSLPVAIICARIYYVVFE), and 88–108 (IWDGGIAIYGALIGAVIVILI). Position 136 (Arg136) interacts with a 1,2-diacyl-sn-glycero-3-phospho-(1'-sn-glycerol). The next 2 helical transmembrane spans lie at 206 to 226 (GEVVLSYIIWYSFGRFFIEGM) and 236 to 256 (LRVSQWLSLILFISAIAAIFY).

It belongs to the Lgt family.

The protein resides in the cell membrane. The enzyme catalyses L-cysteinyl-[prolipoprotein] + a 1,2-diacyl-sn-glycero-3-phospho-(1'-sn-glycerol) = an S-1,2-diacyl-sn-glyceryl-L-cysteinyl-[prolipoprotein] + sn-glycerol 1-phosphate + H(+). Its pathway is protein modification; lipoprotein biosynthesis (diacylglyceryl transfer). Its function is as follows. Catalyzes the transfer of the diacylglyceryl group from phosphatidylglycerol to the sulfhydryl group of the N-terminal cysteine of a prolipoprotein, the first step in the formation of mature lipoproteins. This Ligilactobacillus salivarius (strain UCC118) (Lactobacillus salivarius) protein is Phosphatidylglycerol--prolipoprotein diacylglyceryl transferase.